Here is a 914-residue protein sequence, read N- to C-terminus: Transcription factor AZF1 (914 aa).

3 disordered regions span residues 1–63 (MPPP…ESIS), 93–124 (STGG…SQIG), and 138–275 (QQLQ…NSNQ). Residues 13-34 (QAGQNESQNQSSGEAGEQNQEH) show a composition bias toward polar residues. Residues 44-56 (QSQPASSQPQHQQ) show a composition bias toward low complexity. Ser-61 carries the post-translational modification Phosphoserine. The span at 107-116 (PRLSTSSTHQ) shows a compositional bias: polar residues. The polyglutamine domain stretch occupies residues 136–158 (QQQQLQNQHRQQQQQQQQQSHQQ). The segment covering 138–158 (QQLQNQHRQQQQQQQQQSHQQ) has biased composition (low complexity). Over residues 164-194 (PSFSTGLTGSSSQYQFLPRNDNTSQPPSKRN) the composition is skewed to polar residues. Composition is skewed to low complexity over residues 206–222 (FEFF…FQPS) and 245–275 (SNGT…NSNQ). A phosphoserine mark is found at Ser-286 and Ser-325. Residues 326 to 415 (LSVNNKANGD…STDTTSNSRK (90 aa)) form a disordered region. The segment covering 359 to 390 (DSSNNNNNNNNNNNNENNNDNNNDNNDNSINS) has biased composition (low complexity). Residues 362–386 (NNNNNNNNNNNNENNNDNNNDNNDN) form a polyasparagine domain region. Polar residues predominate over residues 391-412 (ATSTNIPNQEDHSLASTDTTSN). 4 C2H2-type zinc fingers span residues 593-615 (HECP…VRSH), 621-643 (FVCD…ERLH), 649-671 (YSCD…LVTH), and 677-702 (FVCK…NRFH). Disordered regions lie at residues 743–812 (GIKG…SPTQ) and 853–877 (RLGS…APGV). Over residues 754–770 (KKSTISSPENHPASTIL) the composition is skewed to polar residues. Low complexity-rich tracts occupy residues 771–782 (NPNTNANNAIAN), 796–809 (SSSN…SMIS), and 856–868 (SSSS…NNSN).

The protein localises to the nucleus. Its subcellular location is the cytoplasm. The protein resides in the cytosol. In terms of biological role, transcription factor involved in the diauxic shift. In the presence of glucose, activates carbon and energy metabolism genes, and in te presence of glycerol-lactate, activates genes needed for cell wall maintenance. Binds to DNA elements with the sequence AAAAGAAA (A4GA3), a motif enriched in the promoters of AZF1-sensitive genes. Required for glucose induction of CLN3 transcription. Also required for proper FLO11 expression. May also function as a corepressor. Functionally, as an intrinsically disordered protein, AZF1 is capable of forming the prion [AZF1+] that confers resistance to the drug radicicol in a gain-of-function manner but decreases the expression of AZF1's target genes. The sequence is that of Transcription factor AZF1 from Saccharomyces cerevisiae (strain ATCC 204508 / S288c) (Baker's yeast).